A 284-amino-acid chain; its full sequence is Spermidine synthase (284 aa).

The PABS domain occupies 6 to 241 (NGWFSEISEF…GSIGFILCSL (236 aa)). Q37 provides a ligand contact to S-adenosyl 3-(methylsulfanyl)propylamine. Residue Y67 participates in putrescine binding. Residues Q68, D92, E112, 143-144 (DG), and D161 each bind S-adenosyl 3-(methylsulfanyl)propylamine. Residue D161 is the Proton acceptor of the active site. Putrescine contacts are provided by residues 161–164 (DSSD) and Y229.

This sequence belongs to the spermidine/spermine synthase family.

The catalysed reaction is S-adenosyl 3-(methylsulfanyl)propylamine + putrescine = S-methyl-5'-thioadenosine + spermidine + H(+). Its pathway is amine and polyamine biosynthesis; spermidine biosynthesis; spermidine from putrescine: step 1/1. Functionally, catalyzes the production of spermidine from putrescine and decarboxylated S-adenosylmethionine (dcSAM). Has a strong preference for putrescine as substrate. The polypeptide is Spermidine synthase (spsA) (Dictyostelium discoideum (Social amoeba)).